A 251-amino-acid chain; its full sequence is Ubiquinone/menaquinone biosynthesis C-methyltransferase UbiE (251 aa).

Residues Thr74, Asp95, 123–124 (NA), and Ser140 each bind S-adenosyl-L-methionine.

The protein belongs to the class I-like SAM-binding methyltransferase superfamily. MenG/UbiE family.

It carries out the reaction a 2-demethylmenaquinol + S-adenosyl-L-methionine = a menaquinol + S-adenosyl-L-homocysteine + H(+). The catalysed reaction is a 2-methoxy-6-(all-trans-polyprenyl)benzene-1,4-diol + S-adenosyl-L-methionine = a 5-methoxy-2-methyl-3-(all-trans-polyprenyl)benzene-1,4-diol + S-adenosyl-L-homocysteine + H(+). It functions in the pathway quinol/quinone metabolism; menaquinone biosynthesis; menaquinol from 1,4-dihydroxy-2-naphthoate: step 2/2. It participates in cofactor biosynthesis; ubiquinone biosynthesis. In terms of biological role, methyltransferase required for the conversion of demethylmenaquinol (DMKH2) to menaquinol (MKH2) and the conversion of 2-polyprenyl-6-methoxy-1,4-benzoquinol (DDMQH2) to 2-polyprenyl-3-methyl-6-methoxy-1,4-benzoquinol (DMQH2). The protein is Ubiquinone/menaquinone biosynthesis C-methyltransferase UbiE of Enterobacter sp. (strain 638).